A 141-amino-acid polypeptide reads, in one-letter code: Large ribosomal subunit protein uL11 (141 aa).

This sequence belongs to the universal ribosomal protein uL11 family. Part of the ribosomal stalk of the 50S ribosomal subunit. Interacts with L10 and the large rRNA to form the base of the stalk. L10 forms an elongated spine to which L12 dimers bind in a sequential fashion forming a multimeric L10(L12)X complex. In terms of processing, one or more lysine residues are methylated.

In terms of biological role, forms part of the ribosomal stalk which helps the ribosome interact with GTP-bound translation factors. This chain is Large ribosomal subunit protein uL11, found in Lacticaseibacillus casei (strain BL23) (Lactobacillus casei).